Consider the following 495-residue polypeptide: Putative aldehyde dehydrogenase AldA (495 aa).

212–218 (GKGSESG) contributes to the NAD(+) binding site. Active-site residues include E256 and C290.

Belongs to the aldehyde dehydrogenase family.

It catalyses the reaction an aldehyde + NAD(+) + H2O = a carboxylate + NADH + 2 H(+). This Staphylococcus aureus (strain Mu50 / ATCC 700699) protein is Putative aldehyde dehydrogenase AldA (aldA).